A 434-amino-acid polypeptide reads, in one-letter code: D-amino acid dehydrogenase (434 aa).

An FAD-binding site is contributed by 3–17; sequence VIVLGSGVIGTTTAY.

It belongs to the DadA oxidoreductase family. The cofactor is FAD.

It catalyses the reaction a D-alpha-amino acid + A + H2O = a 2-oxocarboxylate + AH2 + NH4(+). Oxidative deamination of D-amino acids. The chain is D-amino acid dehydrogenase from Bordetella parapertussis (strain 12822 / ATCC BAA-587 / NCTC 13253).